The primary structure comprises 593 residues: Trehalose synthase/amylase TreS (593 aa).

Residue Asp-90 coordinates substrate. Residue Asn-132 participates in Ca(2+) binding. Residues His-133 and Gln-198 each coordinate substrate. Asp-200 is a Ca(2+) binding site. Arg-228 is a binding site for substrate. Catalysis depends on Asp-230, which acts as the Nucleophile. Tyr-234, Leu-235, and Glu-237 together coordinate Ca(2+). Residue Glu-272 is the Proton donor of the active site. Substrate contacts are provided by His-341 and Asp-342.

Belongs to the glycosyl hydrolase 13 family. TreS subfamily. As to quaternary structure, homohexamer.

It catalyses the reaction D-maltose = alpha,alpha-trehalose. It carries out the reaction Endohydrolysis of (1-&gt;4)-alpha-D-glucosidic linkages in polysaccharides containing three or more (1-&gt;4)-alpha-linked D-glucose units.. It participates in glycan biosynthesis; glycogen biosynthesis. With respect to regulation, the amylase activity is stimulated by addition of Ca(2+), but this cation and other divalent cations inhibit the trehalose synthase activity. In addition, trehalose synthase activity, but not amylase activity, is strongly inhibited, and in a competitive manner, by validoxylamine. On the other hand, amylase, but not trehalose synthase activity, is inhibited by the known transition-state amylase inhibitor, acarbose, suggesting the possibility of two different active sites. Other metal ions such as Mg(2+), Mn(2+), and Co(2+) are also somewhat effective in the stimulation of amylase activity, but Hg(2+), Cu(2+), Ni(2+) and Zn(2+) are inhibitory. Catalyzes the reversible interconversion of maltose and trehalose by transglucosylation. Maltose is the preferred substrate. To a lesser extent, also displays amylase activity, catalyzing the endohydrolysis of (1-&gt;4)-alpha-D-glucosidic linkages in glycogen and maltooligosaccharides such as maltoheptaose, to produce maltose which then can be converted to trehalose. TreS plays a key role in the utilization of trehalose for the production of glycogen and alpha-glucan via the TreS-Pep2 branch involved in the biosynthesis of maltose-1-phosphate (M1P). Might also function as a sensor and/or regulator of trehalose levels within the cell. Thus, when trehalose levels in the cell become dangerously low, TreS can expedite the conversion of glycogen to maltose via its amylase activity and then convert the maltose to trehalose; but this enzyme also can expedite or promote the conversion of trehalose to glycogen when cytoplasmic trehalose levels become too high. Is also able to catalyze the hydrolytic cleavage of alpha-aryl glucosides, as well as alpha-glucosyl fluoride in vitro. The protein is Trehalose synthase/amylase TreS of Mycolicibacterium smegmatis (strain ATCC 700084 / mc(2)155) (Mycobacterium smegmatis).